The primary structure comprises 230 residues: Thymidylate kinase (230 aa).

23-30 is a binding site for ATP; the sequence is GIDGAGKT.

This sequence belongs to the thymidylate kinase family.

It carries out the reaction dTMP + ATP = dTDP + ADP. Its function is as follows. Phosphorylation of dTMP to form dTDP in both de novo and salvage pathways of dTTP synthesis. This chain is Thymidylate kinase, found in Ureaplasma parvum serovar 3 (strain ATCC 27815 / 27 / NCTC 11736).